The sequence spans 641 residues: SUMO-activating enzyme subunit 2 (641 aa).

ATP contacts are provided by residues 24–29 (GAGGIG), D48, 56–59 (NLNR), K72, 95–96 (SI), and 117–122 (DNNAAR). Positions 158 and 161 each coordinate Zn(2+). Catalysis depends on C173, which acts as the Glycyl thioester intermediate. K190 is covalently cross-linked (Glycyl lysine isopeptide (Lys-Gly) (interchain with G-Cter in SUMO)). Residue K236 forms a Glycyl lysine isopeptide (Lys-Gly) (interchain with G-Cter in SUMO1) linkage. Glycyl lysine isopeptide (Lys-Gly) (interchain with G-Cter in SUMO) cross-links involve residues K257 and K275. The Zn(2+) site is built by C439 and C442. Residues 546 to 641 (GDVPEKGPQK…EEDDDIIALD (96 aa)) form a disordered region. Over residues 556–579 (PSEQSVKNITNGSDDGAQPSTSKA) the composition is skewed to polar residues. Acidic residues predominate over residues 582 to 594 (QDDVLIVDSDEES). Glycyl lysine isopeptide (Lys-Gly) (interchain with G-Cter in SUMO) cross-links involve residues K610, K612, and K623. The span at 630–641 (PVEEDDDIIALD) shows a compositional bias: acidic residues.

The protein belongs to the ubiquitin-activating E1 family. Heterodimer of sae1 and uba2/sae2. The heterodimer corresponds to the two domains that are encoded on a single polypeptide chain in ubiquitin-activating enzyme E1. Interacts with ube2i. In terms of processing, sumoylated with SUMO1 and SUMO2/3 and by UBC9. Sumoylation at Lys-236 inhibits enzymatic activity. Sumoylation at the C-terminal lysine cluster plays an essential role in nuclear trafficking.

The protein localises to the cytoplasm. The protein resides in the nucleus. It functions in the pathway protein modification; protein sumoylation. In terms of biological role, the heterodimer acts as an E1 ligase for sumo1, sumo2, and sumo3. It mediates ATP-dependent activation of sumo proteins followed by formation of a thioester bond between a sumo protein and a conserved active site cysteine residue on uba2/sae2. The polypeptide is SUMO-activating enzyme subunit 2 (uba2) (Xenopus tropicalis (Western clawed frog)).